Consider the following 112-residue polypeptide: Large ribosomal subunit protein eL30z (112 aa).

The protein belongs to the eukaryotic ribosomal protein eL30 family.

In Arabidopsis thaliana (Mouse-ear cress), this protein is Large ribosomal subunit protein eL30z (RPL30A).